The primary structure comprises 485 residues: UDP-N-acetylmuramate--L-alanine ligase (485 aa).

Position 120–126 (120–126 (GSHGKTT)) interacts with ATP.

It belongs to the MurCDEF family.

The protein localises to the cytoplasm. The catalysed reaction is UDP-N-acetyl-alpha-D-muramate + L-alanine + ATP = UDP-N-acetyl-alpha-D-muramoyl-L-alanine + ADP + phosphate + H(+). Its pathway is cell wall biogenesis; peptidoglycan biosynthesis. Its function is as follows. Cell wall formation. This Rickettsia rickettsii (strain Iowa) protein is UDP-N-acetylmuramate--L-alanine ligase.